A 453-amino-acid chain; its full sequence is Bifunctional protein GlmU (453 aa).

A pyrophosphorylase region spans residues 1-225 (MNIVILAAGT…EWETLGVNSK (225 aa)). UDP-N-acetyl-alpha-D-glucosamine is bound by residues 6–9 (LAAG), Lys20, Gln71, 76–77 (GT), 98–100 (YGD), Gly135, Glu150, Asn165, and Asn223. Asp100 provides a ligand contact to Mg(2+). Asn223 is a Mg(2+) binding site. The segment at 226 to 246 (AQLAELERIHQRNLADALLAA) is linker. Residues 247–453 (GVTLADPARI…GYVRPVKKKS (207 aa)) are N-acetyltransferase. Residues Arg329 and Lys347 each coordinate UDP-N-acetyl-alpha-D-glucosamine. His359 acts as the Proton acceptor in catalysis. Residues Tyr362 and Asn373 each coordinate UDP-N-acetyl-alpha-D-glucosamine. Acetyl-CoA-binding positions include Ala376, 382-383 (NY), Ser401, and Ala419.

In the N-terminal section; belongs to the N-acetylglucosamine-1-phosphate uridyltransferase family. The protein in the C-terminal section; belongs to the transferase hexapeptide repeat family. Homotrimer. Mg(2+) is required as a cofactor.

It localises to the cytoplasm. It carries out the reaction alpha-D-glucosamine 1-phosphate + acetyl-CoA = N-acetyl-alpha-D-glucosamine 1-phosphate + CoA + H(+). It catalyses the reaction N-acetyl-alpha-D-glucosamine 1-phosphate + UTP + H(+) = UDP-N-acetyl-alpha-D-glucosamine + diphosphate. The protein operates within nucleotide-sugar biosynthesis; UDP-N-acetyl-alpha-D-glucosamine biosynthesis; N-acetyl-alpha-D-glucosamine 1-phosphate from alpha-D-glucosamine 6-phosphate (route II): step 2/2. It functions in the pathway nucleotide-sugar biosynthesis; UDP-N-acetyl-alpha-D-glucosamine biosynthesis; UDP-N-acetyl-alpha-D-glucosamine from N-acetyl-alpha-D-glucosamine 1-phosphate: step 1/1. It participates in bacterial outer membrane biogenesis; LPS lipid A biosynthesis. Its function is as follows. Catalyzes the last two sequential reactions in the de novo biosynthetic pathway for UDP-N-acetylglucosamine (UDP-GlcNAc). The C-terminal domain catalyzes the transfer of acetyl group from acetyl coenzyme A to glucosamine-1-phosphate (GlcN-1-P) to produce N-acetylglucosamine-1-phosphate (GlcNAc-1-P), which is converted into UDP-GlcNAc by the transfer of uridine 5-monophosphate (from uridine 5-triphosphate), a reaction catalyzed by the N-terminal domain. This is Bifunctional protein GlmU from Burkholderia mallei (strain NCTC 10247).